Here is a 350-residue protein sequence, read N- to C-terminus: MRGKVSLEEAFELPKFAAQTKEKAELYIAPNNRDRYFEEILNPCGNRLELSNKHGIGYTIYSIYSPGPQGWTERAECEEYARECNDYISGEIANHKDRMGAFAALSMHDPKQASEELTRCVKELGFLGALVNDVQHAGPEGETHIFYDQPEWDIFWQTCVDLDVPFYLHPEPPFGSYLRNQYEGRKYLIGPPVSFANGVSLHVLGMIVNGVFDRFPKLKVILGHLGEHIPGDFWRIEHWFEHCSRPLAKSRGDVFAEKPLLHYFRNNIWLTTSGNFSTETLKFCVEHVGAERILFSVDSPYEHIDVGCGWYDDNAKAIMEAVGGEKAYKDIGRDNAKKLFKLGKFYDSEA.

It belongs to the metallo-dependent hydrolases superfamily. As to quaternary structure, homotetramer.

The enzyme catalyses salicylate + H(+) = phenol + CO2. With respect to regulation, inhibited by AgNO(3), HgCl(2), p-chloromercuribenzoic acid and NiCl(2). Reversibly catalyzes the regioselective carboxylation of phenol to form salicylic acid. Involved in a pathway for the degradation of salicylate via phenol. Also catalyzes the decarboxylation of beta-resorcylic acid (2,4-dihydroxybenzoic acid) into resorcinol (1,3-dihydroxybenzene), gamma-resorcylic acid (2,6-dihydroxybenzoic acid) into resorcinol, 2,3-dihydroxybenzoic acid into catechol (1,2-dihydroxybenzene), and 4-aminosalicylic acid into 3-aminophenol. This chain is Salicylate decarboxylase, found in Cutaneotrichosporon moniliiforme (Yeast).